The sequence spans 612 residues: Chloride intracellular channel protein 6 (612 aa).

The interval 1 to 373 (MAEATEPKEV…NGPASEEGDL (373 aa)) is disordered. The span at 34–51 (LEGREASEGAAEAPRDLG) shows a compositional bias: basic and acidic residues. Ser40 bears the Phosphoserine mark. Residues 84–96 (PGTETPGTSGAPG) are compositionally biased toward low complexity. Over residues 120–129 (QQVQGTSSGL) the composition is skewed to polar residues. Residues 140–153 (EDARREPEDPKASE) show a composition bias toward basic and acidic residues. Residues 208-223 (SSPQPQDEAIEIAAAE) show a composition bias toward low complexity. Basic and acidic residues-rich tracts occupy residues 240–264 (AKGEGETLRKDGFEEAAPEEARVDS) and 275–303 (EEARVDSGENRDQGRLQEETGEEEARPES). Residues Ser264, Ser303, and Ser321 each carry the phosphoserine modification. 2 stretches are compositionally biased toward basic and acidic residues: residues 325–335 (EEAKSTGHEES) and 354–364 (ELGRVNGRREN). Ser368 carries the post-translational modification Phosphoserine. Residues 395–398 (CPFS) carry the G-site motif. A helical membrane pass occupies residues 397 to 417 (FSQRLFMILWLKGVIFNVTTV). Residues 441–612 (DGEVKTDVNK…AYSDAAKRMK (172 aa)) enclose the GST C-terminal domain.

The protein belongs to the chloride channel CLIC family. In terms of assembly, monomer (soluble state). Interacts with dopamine receptors DRD2, DRD3 and DRD4. Post-translationally, phosphorylated. In terms of tissue distribution, predominantly expressed in brain, pituitary and stomach. In adult brain, it is restricted to the choroid plexus, the striatal proliferative subventricular zone and the cerebellum where it colocalizes with the D(3)R in the Purkinje cells of the lobules IX and X.

The protein localises to the cytoplasm. Its subcellular location is the cell membrane. The catalysed reaction is chloride(in) = chloride(out). Its activity is regulated as follows. Channel activity is redox- and pH-regulated. Inhibited by IAA-94. Its function is as follows. In the soluble state, catalyzes glutaredoxin-like thiol disulfide exchange reactions with reduced glutathione as electron donor. Can insert into membranes and form voltage-dependent chloride-selective channels. The channel opens upon membrane depolarization at positive voltages and closes at negative membrane voltages. May play a critical role in water-secreting cells, possibly through the regulation of chloride ion transport. This chain is Chloride intracellular channel protein 6 (Clic6), found in Rattus norvegicus (Rat).